A 113-amino-acid chain; its full sequence is T cell receptor alpha variable 8-1 (113 aa).

The N-terminal stretch at 1-20 (MLLLLIPVLGMIFALRDARA) is a signal peptide. Residues 21–113 (QSVSQHNHHV…DTAEYFCAVN (93 aa)) form the Ig-like domain. A disulfide bridge links cysteine 42 with cysteine 110. N-linked (GlcNAc...) asparagine glycosylation is present at asparagine 43.

In terms of assembly, alpha-beta TR is a heterodimer composed of an alpha and beta chain; disulfide-linked. The alpha-beta TR is associated with the transmembrane signaling CD3 coreceptor proteins to form the TR-CD3 (TcR or TCR). The assembly of alpha-beta TR heterodimers with CD3 occurs in the endoplasmic reticulum where a single alpha-beta TR heterodimer associates with one CD3D-CD3E heterodimer, one CD3G-CD3E heterodimer and one CD247 homodimer forming a stable octameric structure. CD3D-CD3E and CD3G-CD3E heterodimers preferentially associate with TR alpha and TR beta chains, respectively. The association of the CD247 homodimer is the last step of TcR assembly in the endoplasmic reticulum and is required for transport to the cell surface.

It is found in the cell membrane. Its function is as follows. V region of the variable domain of T cell receptor (TR) alpha chain that participates in the antigen recognition. Alpha-beta T cell receptors are antigen specific receptors which are essential to the immune response and are present on the cell surface of T lymphocytes. Recognize peptide-major histocompatibility (MH) (pMH) complexes that are displayed by antigen presenting cells (APC), a prerequisite for efficient T cell adaptive immunity against pathogens. Binding of alpha-beta TR to pMH complex initiates TR-CD3 clustering on the cell surface and intracellular activation of LCK that phosphorylates the ITAM motifs of CD3G, CD3D, CD3E and CD247 enabling the recruitment of ZAP70. In turn ZAP70 phosphorylates LAT, which recruits numerous signaling molecules to form the LAT signalosome. The LAT signalosome propagates signal branching to three major signaling pathways, the calcium, the mitogen-activated protein kinase (MAPK) kinase and the nuclear factor NF-kappa-B (NF-kB) pathways, leading to the mobilization of transcription factors that are critical for gene expression and essential for T cell growth and differentiation. The T cell repertoire is generated in the thymus, by V-(D)-J rearrangement. This repertoire is then shaped by intrathymic selection events to generate a peripheral T cell pool of self-MH restricted, non-autoaggressive T cells. Post-thymic interaction of alpha-beta TR with the pMH complexes shapes TR structural and functional avidity. This Homo sapiens (Human) protein is T cell receptor alpha variable 8-1.